A 300-amino-acid chain; its full sequence is N-acetylmuramic acid 6-phosphate etherase (300 aa).

The 163-residue stretch at 55–217 (IAERLRAGGR…STGAMIRLGK (163 aa)) folds into the SIS domain. Residue glutamate 83 is the Proton donor of the active site. Glutamate 114 is a catalytic residue.

It belongs to the GCKR-like family. MurNAc-6-P etherase subfamily. Homodimer.

The catalysed reaction is N-acetyl-D-muramate 6-phosphate + H2O = N-acetyl-D-glucosamine 6-phosphate + (R)-lactate. It participates in amino-sugar metabolism; N-acetylmuramate degradation. Its function is as follows. Specifically catalyzes the cleavage of the D-lactyl ether substituent of MurNAc 6-phosphate, producing GlcNAc 6-phosphate and D-lactate. In Symbiobacterium thermophilum (strain DSM 24528 / JCM 14929 / IAM 14863 / T), this protein is N-acetylmuramic acid 6-phosphate etherase.